The following is a 59-amino-acid chain: Large ribosomal subunit protein uL30 (59 aa).

It belongs to the universal ribosomal protein uL30 family. As to quaternary structure, part of the 50S ribosomal subunit.

This is Large ribosomal subunit protein uL30 from Solibacter usitatus (strain Ellin6076).